Consider the following 754-residue polypeptide: Phosphatidylinositol 4-phosphate 5-kinase 7 (754 aa).

MORN repeat units follow at residues 16–38 (YSGEVKGIIPNGKGKYAWSDGTI), 39–61 (YEGDWDEGKISGKGKLIWSSGAK), 62–84 (YEGDFSGGYLHGFGTMTSPDESV), 85–107 (YSGAWRMNVRHGLGRKEYCNSDL), 108–130 (YDGLWKEGLQDGRGSYSWTNGNR), 131–153 (YIGNWKKGKMCERGVMRWENGDL), 154–176 (YDGFWLNGFRHGSGVYKFADGCL), and 177–198 (YYGTWSRGLKDGKGVFYPAGTK). The PIPK domain maps to 329-750 (GEHNYYLMLN…RFVNFLHKVF (422 aa)). The activation loop stretch occupies residues 710–731 (YNTKKKVEHTCKSLQYDPMTIS).

It catalyses the reaction a 1,2-diacyl-sn-glycero-3-phospho-(1D-myo-inositol 4-phosphate) + ATP = a 1,2-diacyl-sn-glycero-3-phospho-(1D-myo-inositol-4,5-bisphosphate) + ADP + H(+). The protein is Phosphatidylinositol 4-phosphate 5-kinase 7 (PIP5K7) of Arabidopsis thaliana (Mouse-ear cress).